A 386-amino-acid polypeptide reads, in one-letter code: Interleukin-13 receptor subunit alpha-2 (386 aa).

Residues 1-21 (MAFIHLDVGFLYTLLVCTAFG) form the signal peptide. Residues 22 to 338 (SMLSNAEIKV…CWKGDIWKET (317 aa)) lie on the Extracellular side of the membrane. Fibronectin type-III domains lie at 33–133 (PPQD…SPQG), 138–234 (KIQD…LQNI), and 239–338 (PPDY…WKET). Cys-64 and Cys-112 are oxidised to a cystine. The N-linked (GlcNAc...) asparagine glycan is linked to Asn-114. Cystine bridges form between Cys-144–Cys-154 and Cys-183–Cys-196. Asn-214 and Asn-298 each carry an N-linked (GlcNAc...) asparagine glycan. A disulfide bridge links Cys-268 with Cys-315. Residues 321–325 (WSEWS) carry the WSXWS motif motif. Residues 339–359 (LVFFLIPFAFVSIFVLVITCL) traverse the membrane as a helical segment. Topologically, residues 360–386 (LLYKQRALLKTIFHTKKEVFSHQDTFC) are cytoplasmic.

It belongs to the type I cytokine receptor family. Type 5 subfamily. As to quaternary structure, interacts with IL4RA. Interacts with high affinity to interleukin-13 (IL13), but not to interleukin-4 (IL4). Post-translationally, cleaved by MMP8 leading to a soluble form that is also able to interact with IL13. In terms of tissue distribution, expressed in kidney, placenta, liver, skeletal muscle and thymus. Expression was not seen in whole blood and heart.

The protein resides in the cell membrane. Functionally, cell surface receptor that plays a role in the regulation of IL-13-mediated responses. Functions as a decoy receptor that inhibits IL-13- and IL-4-mediated signal transduction via the JAK-STAT pathway and thereby modulates immune responses and inflammation. Serves as a functional signaling receptor for IL-13 in an alternative pathway involving AP-1 ultimately leading to the production of TGFB1. The polypeptide is Interleukin-13 receptor subunit alpha-2 (IL13RA2) (Canis lupus familiaris (Dog)).